The following is a 907-amino-acid chain: Protein translocase subunit SecA (907 aa).

ATP-binding positions include Gln87, 105–109, and Asp512; that span reads GEGKT. The disordered stretch occupies residues 834-907; the sequence is QSDVDDMEQR…KYKQCHGKLS (74 aa). Residues 840-856 are compositionally biased toward basic and acidic residues; sequence MEQRRREEEAKIQRDYQ. A compositionally biased stretch (polar residues) spans 865–876; the sequence is DESQASSDNTPK. Residues 878-887 show a composition bias toward basic and acidic residues; that stretch reads MIREGDKVGR. Zn(2+) contacts are provided by Cys891, Cys893, Cys902, and His903. Residues 897–907 show a composition bias toward basic residues; sequence KKYKQCHGKLS.

The protein belongs to the SecA family. Monomer and homodimer. Part of the essential Sec protein translocation apparatus which comprises SecA, SecYEG and auxiliary proteins SecDF-YajC and YidC. It depends on Zn(2+) as a cofactor.

It localises to the cell inner membrane. Its subcellular location is the cytoplasm. It carries out the reaction ATP + H2O + cellular proteinSide 1 = ADP + phosphate + cellular proteinSide 2.. Its function is as follows. Part of the Sec protein translocase complex. Interacts with the SecYEG preprotein conducting channel. Has a central role in coupling the hydrolysis of ATP to the transfer of proteins into and across the cell membrane, serving both as a receptor for the preprotein-SecB complex and as an ATP-driven molecular motor driving the stepwise translocation of polypeptide chains across the membrane. In Shewanella denitrificans (strain OS217 / ATCC BAA-1090 / DSM 15013), this protein is Protein translocase subunit SecA.